A 140-amino-acid polypeptide reads, in one-letter code: Nucleoside diphosphate kinase (140 aa).

Residues K11, F59, R87, T93, R104, and N114 each contribute to the ATP site. H117 (pros-phosphohistidine intermediate) is an active-site residue.

The protein belongs to the NDK family. As to quaternary structure, homotetramer. It depends on Mg(2+) as a cofactor.

It localises to the cytoplasm. The catalysed reaction is a 2'-deoxyribonucleoside 5'-diphosphate + ATP = a 2'-deoxyribonucleoside 5'-triphosphate + ADP. It catalyses the reaction a ribonucleoside 5'-diphosphate + ATP = a ribonucleoside 5'-triphosphate + ADP. In terms of biological role, major role in the synthesis of nucleoside triphosphates other than ATP. The ATP gamma phosphate is transferred to the NDP beta phosphate via a ping-pong mechanism, using a phosphorylated active-site intermediate. The protein is Nucleoside diphosphate kinase of Erythrobacter litoralis (strain HTCC2594).